A 311-amino-acid polypeptide reads, in one-letter code: MAGELSIGAELPTSPLAMEYVNDFDLMKFDVKKEPLGRNDRSGRHCTRLQPAGSVSSTPISTPCSSVPSSPSFSPTEQKTHLEDLYWMANSYQQMNPEALNLTPEDAVEALIGSHQVSQQLQGFESFRAHHHHHHHHHQHHHQYPAVTHEDLAGSGHPHHHHHHHHQASPTPSTSSSSSQQLQTSHQQHPPSSSVEDRFSDDQLVSMSVRELNRHLRGFTKDEVIRLKQKRRTLKNRGYAQSCRYKRVQQKHHLENEKTQLIQQVEQLKQEVTRLARERDAYKLKCEKLASNGFREAGSTSDNPSSPEFFM.

Disordered regions lie at residues 35–78 (PLGR…PTEQ) and 150–199 (EDLA…EDRF). Residues 54–76 (SVSSTPISTPCSSVPSSPSFSPT) are compositionally biased toward low complexity. Basic residues predominate over residues 157 to 167 (HPHHHHHHHHQ). Positions 168 to 194 (ASPTPSTSSSSSQQLQTSHQQHPPSSS) are enriched in low complexity. The tract at residues 226–251 (RLKQKRRTLKNRGYAQSCRYKRVQQK) is basic motif. In terms of domain architecture, bZIP spans 226–289 (RLKQKRRTLK…DAYKLKCEKL (64 aa)). A leucine-zipper region spans residues 254–275 (LENEKTQLIQQVEQLKQEVTRL).

Belongs to the bZIP family. Maf subfamily. In terms of assembly, homodimer or heterodimer with other bHLH-Zip transcription factors. Binds DNA as a homodimer or heterodimer. Self-associates; the interaction requires the intact MAFB leucine-zipper domain. Interacts with FOS, HOXD12 and PRRX1. As to expression, expressed in brain, thymus, gut, lung, mesenterium, spleen, kidney, ovary and bursa.

Its subcellular location is the nucleus. Acts as a transcriptional activator or repressor. Positively regulates the expression of alpha-A crystallin genes during lens fiber cell differentiation. Binds to Maf recognition elements (MARE). The polypeptide is Transcription factor MafB (MAFB) (Gallus gallus (Chicken)).